The sequence spans 351 residues: Protein disulfide isomerase CRELD2 (351 aa).

Positions 1 to 21 are cleaved as a signal peptide; it reads MRPPAPAVLGLLLLLLPTGEA. Positions 28–31 match the CXXC motif; it reads CKRC. Cystine bridges form between cysteine 28–cysteine 31, cysteine 137–cysteine 151, cysteine 145–cysteine 163, and cysteine 165–cysteine 174. One can recognise an EGF-like 1 domain in the interval 133–175; it reads DCLACQGGSERPCSGNGHCVGDGTREGDGSCQCHLGYQGPLCS. Residues 190 to 237 form an FU 1 repeat; sequence HSICSACDEACKTCVGPTNRDCGQCEVGWVRQDDACVDVDECAAEPPP. N-linked (GlcNAc...) asparagine glycosylation occurs at asparagine 248. An FU 2 repeat occupies 250-297; sequence SFVCEECDPTCMGCTGKGPTQCRECIAGYSKESGQCEDIDECSLAEKP. Positions 260–263 match the CXXC motif; that stretch reads CMGC. Cystine bridges form between cysteine 260/cysteine 263, cysteine 291/cysteine 305, cysteine 298/cysteine 314, and cysteine 316/cysteine 327. The EGF-like 2; calcium-binding domain maps to 287–328; sequence DIDECSLAEKPCLRDNENCYNTPGSFVCVCPDGFEEAEDTCV. Residues 329-351 form a disordered region; sequence QTRPAGAEATEASPTQPPSREDL.

It belongs to the CRELD family. Interacts with CHRNA4. Component of a complex containing at least CRELD2, MANF, MATN3 and PDIA4.

It localises to the endoplasmic reticulum. The enzyme catalyses Catalyzes the rearrangement of -S-S- bonds in proteins.. Functionally, protein disulfide isomerase. Might play a role in the unfolded protein response. May regulate transport of alpha4-beta2 neuronal acetylcholine receptor. The polypeptide is Protein disulfide isomerase CRELD2 (CRELD2) (Bos taurus (Bovine)).